Consider the following 105-residue polypeptide: Large ribosomal subunit protein eL36 (105 aa).

This sequence belongs to the eukaryotic ribosomal protein eL36 family. As to quaternary structure, component of the large ribosomal subunit.

The protein resides in the cytoplasm. The protein localises to the cytosol. Component of the large ribosomal subunit. The ribosome is a large ribonucleoprotein complex responsible for the synthesis of proteins in the cell. This Gallus gallus (Chicken) protein is Large ribosomal subunit protein eL36 (RPL36).